Reading from the N-terminus, the 470-residue chain is Shutoff alkaline exonuclease (470 aa).

Belongs to the herpesviridae alkaline nuclease family. As to quaternary structure, forms a complex with the DNA polymerase, the DNA polymerase processivity factor, and the major DNA binding protein.

It is found in the host nucleus. The protein localises to the host cytoplasm. Its function is as follows. Plays a role in processing non linear or branched viral DNA intermediates in order to promote the production of mature packaged unit-length linear progeny viral DNA molecules. Exhibits endonuclease and exonuclease activities and accepts both double-stranded and single-stranded DNA as substrate. Exonuclease digestion of DNA is in the 5'-&gt; 3' direction and the products are 5'-monophosphate nucleosides. Additionally, forms a recombinase with the major DNA-binding protein, which displays strand exchange activity. Also acts as a cytoplasmic RNA endonuclease that induces degradation of the majority of the cellular messenger RNAs during early lytic infection. The resulting inhibition of cellular protein synthesis serves to ensure maximal viral gene expression and evasion from host immune response. Internally cleaves host mRNAs which are then degraded by the cellular exonuclease XRN1. Bypasses therefore the regulatory steps of deadenylation and decapping normally required for XRN1 activation. The polypeptide is Shutoff alkaline exonuclease (Epstein-Barr virus (strain GD1) (HHV-4)).